The primary structure comprises 293 residues: Taste receptor type 2 member 143 (293 aa).

Residues 1–6 are Extracellular-facing; sequence MPSTPT. Residues 7–27 traverse the membrane as a helical segment; the sequence is LIFIIIFYLVSLASMLQNGFM. Over 28-55 the chain is Cytoplasmic; that stretch reads MIVLGREWMRNRTLPAADMIVASLASSR. A helical membrane pass occupies residues 56 to 76; it reads FCLHGIAILANLLASFDFCYQ. The Extracellular portion of the chain corresponds to 77–79; sequence ANL. A helical membrane pass occupies residues 80-100; the sequence is IGILWDFTNTLIFWLTAWLAI. The Cytoplasmic portion of the chain corresponds to 101 to 127; sequence FYCVKISSFSHPVLFWLKWRISQLVPR. Residues 128 to 148 form a helical membrane-spanning segment; the sequence is LLVVSLIIGGLSAVISATGNF. The Extracellular portion of the chain corresponds to 149–181; the sequence is MANQMTISQGFHGNCTFGHMSLDFYRYYYLYHS. N-linked (GlcNAc...) asparagine glycosylation occurs at Asn-162. Residues 182–202 traverse the membrane as a helical segment; that stretch reads VLMWFTPFFLFLVSVIVLMFS. Residues 203–227 lie on the Cytoplasmic side of the membrane; it reads LYQHVEKMRGHRPGPWDLHTQAHTM. A helical membrane pass occupies residues 228–248; the sequence is ALKSLTFFFIFYIFFFLALVI. Over 249 to 264 the chain is Extracellular; the sequence is SSTKRKSMQSYYWARE. A helical membrane pass occupies residues 265-285; that stretch reads AIIYTGIFLNSIILLFSNPKL. Topologically, residues 286-293 are cytoplasmic; sequence RKALKMRF.

It belongs to the G-protein coupled receptor T2R family.

The protein resides in the membrane. Functionally, putative taste receptor which may play a role in the perception of bitterness. This chain is Taste receptor type 2 member 143 (Tas2r143), found in Mus musculus (Mouse).